The sequence spans 101 residues: Integration host factor subunit beta (101 aa).

This sequence belongs to the bacterial histone-like protein family. As to quaternary structure, heterodimer of an alpha and a beta chain.

Functionally, this protein is one of the two subunits of integration host factor, a specific DNA-binding protein that functions in genetic recombination as well as in transcriptional and translational control. The polypeptide is Integration host factor subunit beta (Janthinobacterium sp. (strain Marseille) (Minibacterium massiliensis)).